A 578-amino-acid polypeptide reads, in one-letter code: CTP synthase 2 (578 aa).

The Glutamine amidotransferase type-1 domain maps to 300–553 (SIALVGKYTK…MLAASGKLNT (254 aa)). Active-site for GATase activity residues include C399, H526, and E528.

This sequence belongs to the CTP synthase family.

It carries out the reaction UTP + L-glutamine + ATP + H2O = CTP + L-glutamate + ADP + phosphate + 2 H(+). It participates in pyrimidine metabolism; CTP biosynthesis via de novo pathway; CTP from UDP: step 2/2. Functionally, catalyzes the ATP-dependent amination of UTP to CTP with either L-glutamine or ammonia as the source of nitrogen. Constitutes the rate-limiting enzyme in the synthesis of cytosine nucleotides. In Xenopus laevis (African clawed frog), this protein is CTP synthase 2 (ctps2).